The primary structure comprises 430 residues: RNA polymerase-associated protein LEO1 (430 aa).

A compositionally biased stretch (polar residues) spans M1 to A10. The interval M1–G128 is disordered. Residues K18–D30 are compositionally biased toward low complexity. Residues R99–S119 are compositionally biased toward basic and acidic residues. Coiled-coil stretches lie at residues T326–M347 and E409–S429. Residues R349 to D430 are disordered.

Belongs to the LEO1 family. Component of the PAF1 complex which consists of at least cdc-73, ctr-9, leo-1, pafo-1 and rtfo-1.

Its subcellular location is the nucleus. It localises to the cytoplasm. Functionally, component of the PAF1 complex which is a multifunctional complex involved in transcription initiation via genetic interactions with TATA-binding proteins, elongation and transcription-coupled histone modification. The protein is RNA polymerase-associated protein LEO1 of Caenorhabditis elegans.